The chain runs to 338 residues: Ketol-acid reductoisomerase (NADP(+)) (338 aa).

Positions 1–181 (MNVYYDRDCD…GGGRTGIIET (181 aa)) constitute a KARI N-terminal Rossmann domain. NADP(+)-binding positions include 24–27 (YGSQ), Arg47, Ser50, Ser52, and 82–85 (DEFQ). Residue His107 is part of the active site. Residue Gly133 participates in NADP(+) binding. One can recognise a KARI C-terminal knotted domain in the interval 182-327 (TFKDETETDL…GNLRAMMPWI (146 aa)). Positions 190, 194, 226, and 230 each coordinate Mg(2+). Ser251 provides a ligand contact to substrate.

It belongs to the ketol-acid reductoisomerase family. Mg(2+) serves as cofactor.

The enzyme catalyses (2R)-2,3-dihydroxy-3-methylbutanoate + NADP(+) = (2S)-2-acetolactate + NADPH + H(+). It catalyses the reaction (2R,3R)-2,3-dihydroxy-3-methylpentanoate + NADP(+) = (S)-2-ethyl-2-hydroxy-3-oxobutanoate + NADPH + H(+). The protein operates within amino-acid biosynthesis; L-isoleucine biosynthesis; L-isoleucine from 2-oxobutanoate: step 2/4. It functions in the pathway amino-acid biosynthesis; L-valine biosynthesis; L-valine from pyruvate: step 2/4. Its function is as follows. Involved in the biosynthesis of branched-chain amino acids (BCAA). Catalyzes an alkyl-migration followed by a ketol-acid reduction of (S)-2-acetolactate (S2AL) to yield (R)-2,3-dihydroxy-isovalerate. In the isomerase reaction, S2AL is rearranged via a Mg-dependent methyl migration to produce 3-hydroxy-3-methyl-2-ketobutyrate (HMKB). In the reductase reaction, this 2-ketoacid undergoes a metal-dependent reduction by NADPH to yield (R)-2,3-dihydroxy-isovalerate. The polypeptide is Ketol-acid reductoisomerase (NADP(+)) (Trichlorobacter lovleyi (strain ATCC BAA-1151 / DSM 17278 / SZ) (Geobacter lovleyi)).